Reading from the N-terminus, the 285-residue chain is Ribosomal RNA small subunit methyltransferase A (285 aa).

S-adenosyl-L-methionine contacts are provided by Asn30, Leu32, Gly57, Glu78, Asp101, and Asn121.

It belongs to the class I-like SAM-binding methyltransferase superfamily. rRNA adenine N(6)-methyltransferase family. RsmA subfamily.

The protein resides in the cytoplasm. It carries out the reaction adenosine(1518)/adenosine(1519) in 16S rRNA + 4 S-adenosyl-L-methionine = N(6)-dimethyladenosine(1518)/N(6)-dimethyladenosine(1519) in 16S rRNA + 4 S-adenosyl-L-homocysteine + 4 H(+). Its function is as follows. Specifically dimethylates two adjacent adenosines (A1518 and A1519) in the loop of a conserved hairpin near the 3'-end of 16S rRNA in the 30S particle. May play a critical role in biogenesis of 30S subunits. In Treponema pallidum (strain Nichols), this protein is Ribosomal RNA small subunit methyltransferase A.